The following is a 430-amino-acid chain: Dihydrolipoyllysine-residue acetyltransferase component of pyruvate dehydrogenase complex (430 aa).

The Lipoyl-binding domain occupies 2 to 77; sequence AFEFRLPDIG…VVGDVIVKID (76 aa). At K43 the chain carries N6-lipoyllysine. Positions 80 to 122 are disordered; sequence DAEDMQFKGHDDDSSSKEEPAKEEAPAEQAPVATQTEEVDENR. Positions 84–104 are enriched in basic and acidic residues; sequence MQFKGHDDDSSSKEEPAKEEA. In terms of domain architecture, Peripheral subunit-binding (PSBD) spans 125–162; sequence KAMPSVRKYAREKGVNIKAVSGSGKNGRITKEDVDAYL. The interval 164-200 is disordered; that stretch reads GGAPTASNESADSATNEEVAETPAAPAAVSLEGDFPE. The span at 177–192 shows a compositional bias: low complexity; it reads ATNEEVAETPAAPAAV. H401 is an active-site residue.

Belongs to the 2-oxoacid dehydrogenase family. In terms of assembly, forms a 24-polypeptide structural core with octahedral symmetry. (R)-lipoate serves as cofactor.

It catalyses the reaction N(6)-[(R)-dihydrolipoyl]-L-lysyl-[protein] + acetyl-CoA = N(6)-[(R)-S(8)-acetyldihydrolipoyl]-L-lysyl-[protein] + CoA. Functionally, the pyruvate dehydrogenase complex catalyzes the overall conversion of pyruvate to acetyl-CoA and CO(2). It contains multiple copies of three enzymatic components: pyruvate dehydrogenase (E1), dihydrolipoamide acetyltransferase (E2) and lipoamide dehydrogenase (E3). In Staphylococcus aureus, this protein is Dihydrolipoyllysine-residue acetyltransferase component of pyruvate dehydrogenase complex (pdhC).